The chain runs to 95 residues: Small ribosomal subunit protein bS16 (95 aa).

Belongs to the bacterial ribosomal protein bS16 family.

This Thermotoga maritima (strain ATCC 43589 / DSM 3109 / JCM 10099 / NBRC 100826 / MSB8) protein is Small ribosomal subunit protein bS16.